The sequence spans 422 residues: Glutamate-1-semialdehyde 2,1-aminomutase (422 aa).

Lys-265 is subject to N6-(pyridoxal phosphate)lysine.

This sequence belongs to the class-III pyridoxal-phosphate-dependent aminotransferase family. HemL subfamily. Pyridoxal 5'-phosphate serves as cofactor.

It is found in the cytoplasm. It carries out the reaction (S)-4-amino-5-oxopentanoate = 5-aminolevulinate. Its pathway is porphyrin-containing compound metabolism; protoporphyrin-IX biosynthesis; 5-aminolevulinate from L-glutamyl-tRNA(Glu): step 2/2. This is Glutamate-1-semialdehyde 2,1-aminomutase from Methanococcoides burtonii (strain DSM 6242 / NBRC 107633 / OCM 468 / ACE-M).